Here is an 846-residue protein sequence, read N- to C-terminus: Translation initiation factor IF-2 (846 aa).

A disordered region spans residues 94 to 263 (QRSPEEIQAE…HGFQNPTGPV (170 aa)). Basic and acidic residues predominate over residues 96–135 (SPEEIQAEQKRELDERRAAENAARDKVEAEVRQRNEEQAR). Low complexity-rich tracts occupy residues 136 to 148 (RQAA…APAP) and 158 to 176 (AAPV…ASED). 2 stretches are compositionally biased toward basic and acidic residues: residues 177 to 206 (AAAR…RGEA) and 230 to 239 (TTDEESDGAR). The span at 240-253 (RGRGGKSKLKKRNQ) shows a compositional bias: basic residues. Residues 346–513 (SRAPVVTVMG…AVLLQAEILE (168 aa)) enclose the tr-type G domain. Residues 355-362 (GHVDHGKT) are G1. 355-362 (GHVDHGKT) is a GTP binding site. The tract at residues 380–384 (GITQH) is G2. Residues 401 to 404 (DTPG) form a G3 region. GTP is bound by residues 401 to 405 (DTPGH) and 455 to 458 (NKID). The interval 455–458 (NKID) is G4. The tract at residues 491–493 (SAK) is G5.

This sequence belongs to the TRAFAC class translation factor GTPase superfamily. Classic translation factor GTPase family. IF-2 subfamily.

It localises to the cytoplasm. In terms of biological role, one of the essential components for the initiation of protein synthesis. Protects formylmethionyl-tRNA from spontaneous hydrolysis and promotes its binding to the 30S ribosomal subunits. Also involved in the hydrolysis of GTP during the formation of the 70S ribosomal complex. This is Translation initiation factor IF-2 from Pseudomonas putida (strain ATCC 47054 / DSM 6125 / CFBP 8728 / NCIMB 11950 / KT2440).